We begin with the raw amino-acid sequence, 117 residues long: Large ribosomal subunit protein bL19 (117 aa).

This sequence belongs to the bacterial ribosomal protein bL19 family.

Functionally, this protein is located at the 30S-50S ribosomal subunit interface and may play a role in the structure and function of the aminoacyl-tRNA binding site. The chain is Large ribosomal subunit protein bL19 from Shewanella woodyi (strain ATCC 51908 / MS32).